We begin with the raw amino-acid sequence, 202 residues long: NADH-quinone oxidoreductase subunit C (202 aa).

Belongs to the complex I 30 kDa subunit family. As to quaternary structure, NDH-1 is composed of 14 different subunits. Subunits NuoB, C, D, E, F, and G constitute the peripheral sector of the complex.

It is found in the cell inner membrane. The catalysed reaction is a quinone + NADH + 5 H(+)(in) = a quinol + NAD(+) + 4 H(+)(out). In terms of biological role, NDH-1 shuttles electrons from NADH, via FMN and iron-sulfur (Fe-S) centers, to quinones in the respiratory chain. The immediate electron acceptor for the enzyme in this species is believed to be ubiquinone. Couples the redox reaction to proton translocation (for every two electrons transferred, four hydrogen ions are translocated across the cytoplasmic membrane), and thus conserves the redox energy in a proton gradient. This chain is NADH-quinone oxidoreductase subunit C, found in Acidovorax sp. (strain JS42).